The primary structure comprises 367 residues: Peptide chain release factor 2 (367 aa).

The residue at position 250 (glutamine 250) is an N5-methylglutamine.

The protein belongs to the prokaryotic/mitochondrial release factor family. Methylated by PrmC. Methylation increases the termination efficiency of RF2.

The protein resides in the cytoplasm. Functionally, peptide chain release factor 2 directs the termination of translation in response to the peptide chain termination codons UGA and UAA. In Kineococcus radiotolerans (strain ATCC BAA-149 / DSM 14245 / SRS30216), this protein is Peptide chain release factor 2.